The primary structure comprises 338 residues: MGSSSSTALARLGLPGQPRSTWLGVAALGLAAVALGTVAWRRARPRRRRQLQQVGTVSKVWIYPIKSCKGVSVCETECTDMGLRCGKVRDRFWMVVKEDGHMITARQEPRLVLVTITLENNYLMLEAPGMEPIVLPIKLPSSNKIHDCRLFGLDIKGRDCGDEVARWFTSYLKTQAYRLVQFDTKMKGRTTKKLYPSESYLQNYEVAYPDCSPIHLISEASLVDLNTRLQKKVKMEYFRPNIVVSGCEAFEEDTWDELLIGDVEMKRVLSCPRCVLTTVDPDTGIIDRKEPLETLKSYRLCDPSVKSLYQSSPLFGMYFSVEKIGSLRVGDPVYRMVD.

The N-terminal 35 residues, 1-35, are a transit peptide targeting the mitochondrion; sequence MGSSSSTALARLGLPGQPRSTWLGVAALGLAAVAL. Residues K59, K138, and K144 each participate in a glycyl lysine isopeptide (Lys-Gly) (interchain with G-Cter in ubiquitin) cross-link. K156 carries the post-translational modification N6-acetyllysine; alternate. A Glycyl lysine isopeptide (Lys-Gly) (interchain with G-Cter in ubiquitin); alternate cross-link involves residue K156. Residues K173, K187, K289, and K296 each participate in a glycyl lysine isopeptide (Lys-Gly) (interchain with G-Cter in ubiquitin) cross-link. Residues 188–336 form the MOSC domain; it reads GRTTKKLYPS…LRVGDPVYRM (149 aa).

In terms of assembly, component of a complex composed of cytochrome b5, NADH-cytochrome b5 reductase (CYB5R3) and MTARC2. The cofactor is Mo-molybdopterin. In terms of processing, ubiquitinated by PRKN during mitophagy, leading to its degradation and enhancement of mitophagy. Deubiquitinated by USP30.

It is found in the mitochondrion outer membrane. Its subcellular location is the peroxisome. It carries out the reaction N(omega)-hydroxy-L-arginine + 2 Fe(II)-[cytochrome b5] + 2 H(+) = L-arginine + 2 Fe(III)-[cytochrome b5] + H2O. Catalyzes the reduction of N-oxygenated molecules, acting as a counterpart of cytochrome P450 and flavin-containing monooxygenases in metabolic cycles. As a component of prodrug-converting system, reduces a multitude of N-hydroxylated prodrugs particularly amidoximes, leading to increased drug bioavailability. May be involved in mitochondrial N(omega)-hydroxy-L-arginine (NOHA) reduction, regulating endogenous nitric oxide levels and biosynthesis. Postulated to cleave the N-OH bond of N-hydroxylated substrates in concert with electron transfer from NADH to cytochrome b5 reductase then to cytochrome b5, the ultimate electron donor that primes the active site for substrate reduction. The protein is Mitochondrial amidoxime reducing component 2 (Mtarc2) of Rattus norvegicus (Rat).